A 1481-amino-acid polypeptide reads, in one-letter code: Cystic fibrosis transmembrane conductance regulator (1481 aa).

Topologically, residues 1 to 77 are cytoplasmic; the sequence is MQRSPLEKAS…KLINALRRCF (77 aa). The helical transmembrane segment at 78–98 threads the bilayer; it reads FWRFMFYGIILYLGEVTKAVQ. In terms of domain architecture, ABC transmembrane type-1 1 spans 81–365; that stretch reads FMFYGIILYL…WAVQTWYDSL (285 aa). Residues 99 to 122 are Extracellular-facing; that stretch reads PLLLGRIIASYDPDNKAERSIAIY. The helical transmembrane segment at 123–146 threads the bilayer; it reads LGIGLCLLFIVRTLLLHPAIFGLH. Residues 147 to 195 lie on the Cytoplasmic side of the membrane; it reads HIGMQMRIAMFSLIYKKTLKLSSRVLDKISIGQLVSLLSNNLNKFDEGL. Residues 196-216 form a helical membrane-spanning segment; the sequence is ALAHFVWIAPLQVTLLMGLLW. Residues 217-222 lie on the Extracellular side of the membrane; sequence ELLQAF. Residues 223 to 243 form a helical membrane-spanning segment; sequence TFCGLAFLVVLAFLQAGLGKM. The Cytoplasmic segment spans residues 244 to 298; that stretch reads MMKYRDQRAGKINERLVITSEIIENIQSVKAYCWEEAMEKIIENLRQTELKLTRK. Residues 299–319 form a helical membrane-spanning segment; sequence AAYVRYLNSSAFFFSGFFVVF. The Extracellular portion of the chain corresponds to 320 to 339; the sequence is LSVLPYALLKGIILRKIFTT. Residues 340 to 358 traverse the membrane as a helical segment; the sequence is ISFCIVLRMAVTRQFPWAV. The Cytoplasmic portion of the chain corresponds to 359–858; sequence QTWYDSLGAI…YLRYITVHKS (500 aa). ATP contacts are provided by residues W401, 457–464, and Q492; that span reads GSTGAGKT. The ABC transporter 1 domain occupies 423 to 645; the sequence is NGDNNLFFSN…RPDFSSKLMG (223 aa). Residue C523 is the site of S-palmitoyl cysteine attachment. Phosphoserine occurs at positions 548 and 659. Residues 653 to 831 are disordered R region; the sequence is TAERRNSIIT…EEINEEDLRD (179 aa). Residue S669 is modified to Phosphoserine; by PKA. S685 is subject to Phosphoserine. K687 is covalently cross-linked (Glycyl lysine isopeptide (Lys-Gly) (interchain with G-Cter in ubiquitin)). A phosphoserine mark is found at S699 and S711. At T716 the chain carries Phosphothreonine. Phosphoserine occurs at positions 736, 767, 790, 795, and 813. The chain crosses the membrane as a helical span at residues 859–879; sequence LMFVLIWCLVVFLAEVAASLV. An ABC transmembrane type-1 2 domain is found at 859–1155; the sequence is LMFVLIWCLV…AVNSSIDVDS (297 aa). Over 880-918 the chain is Extracellular; sequence VLCLFPKILFQDKGNSTKSANNSYAVIITSTSSYYIFYI. N894 and N900 each carry an N-linked (GlcNAc...) asparagine glycan. The chain crosses the membrane as a discontinuously helical span at residues 919–939; that stretch reads YVGVADTLLALGLFRGLPLVH. At 940–990 the chain is on the cytoplasmic side; it reads TLITVSKTLHHKMLQSVLQAPMSTLNTLKTGGILNRFSKDIAVLDDLLPLT. The chain crosses the membrane as a helical span at residues 991-1011; it reads IFDFVQLLLIVIGAVVVVSVL. Topologically, residues 1012–1013 are extracellular; the sequence is QP. The chain crosses the membrane as a helical span at residues 1014 to 1034; the sequence is YIFLATVPVIAAFILLRAYFL. Topologically, residues 1035–1095 are cytoplasmic; that stretch reads HTSQQLKQLE…TANWFLYLST (61 aa). Residues 1096 to 1116 traverse the membrane as a helical segment; sequence LRWFQMRIEMIFVIFFIAVTF. The Extracellular segment spans residues 1117–1130; that stretch reads ISILTTGEGEGRVG. A helical membrane pass occupies residues 1131 to 1151; sequence IILTLAMNIMGTLQWAVNSSI. At 1152-1481 the chain is on the cytoplasmic side; that stretch reads DVDSLMRSVS…TEEEVQETKI (330 aa). The 234-residue stretch at 1211-1444 folds into the ABC transporter 2 domain; the sequence is MTVKDLTAKY…KSLFRQAISP (234 aa). Residues Y1220 and 1245-1252 each bind ATP; that span reads GRTGSGKS. Residues 1387 to 1481 are interaction with GORASP2; that stretch reads RTLKQAFADC…TEEEVQETKI (95 aa). A lipid anchor (S-palmitoyl cysteine) is attached at C1396. The tract at residues 1452–1481 is disordered; it reads PQRNSSRQKSRSNIAALKEETEEEVQETKI. Residues 1453-1464 are compositionally biased toward low complexity; that stretch reads QRNSSRQKSRSN. S1457 carries the phosphoserine modification. Over residues 1471-1481 the composition is skewed to acidic residues; that stretch reads ETEEEVQETKI. Residues 1479 to 1481 carry the PDZ-binding motif; that stretch reads TKI.

Belongs to the ABC transporter superfamily. ABCC family. CFTR transporter (TC 3.A.1.202) subfamily. As to quaternary structure, monomer; does not require oligomerization for channel activity. May form oligomers in the membrane. Interacts with SLC26A3, SLC26A6 and NHERF1. Interacts with SHANK2. Interacts with MYO6. Interacts (via C-terminus) with GOPC (via PDZ domain); this promotes CFTR internalization and thereby decreases channel activity. Interacts with SLC4A7 through NHERF1. Found in a complex with MYO5B and RAB11A. Interacts with ANO1. Interacts with SLC26A8. Interacts with AHCYL1; the interaction increases CFTR activity. Interacts with CSE1L. The core-glycosylated form interacts with GORASP2 (via PDZ GRASP-type 1 domain) in respone to ER stress. Interacts with MARCHF2; the interaction leads to CFTR ubiqtuitination and degradation. Interacts with ADGRG2. N-glycosylated. In terms of processing, phosphorylated; cAMP treatment promotes phosphorylation and activates the channel. Dephosphorylation decreases the ATPase activity (in vitro). Phosphorylation at PKA sites activates the channel. Phosphorylation at PKC sites enhances the response to phosphorylation by PKA. Phosphorylated by AMPK; this inhibits channel activity. Post-translationally, ubiquitinated, leading to its degradation in the lysosome. Deubiquitination by USP10 in early endosomes enhances its endocytic recycling to the cell membrane. Ubiquitinated by RNF185 during ER stress. Ubiquitinated by MARCHF2.

It is found in the apical cell membrane. The protein resides in the early endosome membrane. It localises to the cell membrane. Its subcellular location is the recycling endosome membrane. The protein localises to the endoplasmic reticulum membrane. It is found in the nucleus. The catalysed reaction is ATP + H2O + closed Cl(-) channel = ADP + phosphate + open Cl(-) channel.. It carries out the reaction chloride(in) = chloride(out). It catalyses the reaction hydrogencarbonate(in) = hydrogencarbonate(out). The enzyme catalyses ATP + H2O = ADP + phosphate + H(+). In terms of biological role, epithelial ion channel that plays an important role in the regulation of epithelial ion and water transport and fluid homeostasis. Mediates the transport of chloride ions across the cell membrane. Possesses an intrinsic ATPase activity and utilizes ATP to gate its channel; the passive flow of anions through the channel is gated by cycles of ATP binding and hydrolysis by the ATP-binding domains. The ion channel is also permeable to HCO(3)(-); selectivity depends on the extracellular chloride concentration. Exerts its function also by modulating the activity of other ion channels and transporters. Contributes to the regulation of the pH and the ion content of the epithelial fluid layer. Modulates the activity of the epithelial sodium channel (ENaC) complex, in part by regulating the cell surface expression of the ENaC complex. May regulate bicarbonate secretion and salvage in epithelial cells by regulating the transporter SLC4A7. Can inhibit the chloride channel activity of ANO1. Plays a role in the chloride and bicarbonate homeostasis during sperm epididymal maturation and capacitation. In Muntiacus reevesi (Reeves' muntjac), this protein is Cystic fibrosis transmembrane conductance regulator.